Here is a 380-residue protein sequence, read N- to C-terminus: Epoxyqueuosine reductase (380 aa).

The active-site Proton donor is the Asp-134. The 4Fe-4S ferredoxin-type 1 domain maps to 178-208 (FPPDKPIEDQCGGCTKCIDICPTGALIQGGQ). 8 residues coordinate [4Fe-4S] cluster: Cys-188, Cys-191, Cys-194, Cys-198, Cys-214, Cys-240, Cys-243, and Cys-247. The 4Fe-4S ferredoxin-type 2 domain maps to 226–258 (PEEYRDKIGNRIYGCDTCQTVCPKNKGMDFHNH).

The protein belongs to the QueG family. Monomer. It depends on cob(II)alamin as a cofactor. [4Fe-4S] cluster is required as a cofactor.

The protein localises to the cytoplasm. The catalysed reaction is epoxyqueuosine(34) in tRNA + AH2 = queuosine(34) in tRNA + A + H2O. It participates in tRNA modification; tRNA-queuosine biosynthesis. Catalyzes the conversion of epoxyqueuosine (oQ) to queuosine (Q), which is a hypermodified base found in the wobble positions of tRNA(Asp), tRNA(Asn), tRNA(His) and tRNA(Tyr). This is Epoxyqueuosine reductase from Bacillus cereus (strain ATCC 14579 / DSM 31 / CCUG 7414 / JCM 2152 / NBRC 15305 / NCIMB 9373 / NCTC 2599 / NRRL B-3711).